An 887-amino-acid polypeptide reads, in one-letter code: Degenerin-like protein unc-105 (887 aa).

The disordered stretch occupies residues 1-33; the sequence is MAEDRIKSKLRRPASIESTMSSRTKPRHKPSPM. The Cytoplasmic segment spans residues 1 to 93; the sequence is MAEDRIKSKL…AATADGKWRW (93 aa). Residues 94 to 114 form a helical membrane-spanning segment; that stretch reads FWYTAFTICLLALLIQIFFLI. Residues 115 to 698 are Extracellular-facing; sequence SKYRQYGKTV…SVLADLGGLT (584 aa). Asn244, Asn450, Asn473, Asn581, and Asn599 each carry an N-linked (GlcNAc...) asparagine glycan. The helical transmembrane segment at 699-719 threads the bilayer; sequence GLWIGASVVSLLEIVTLIVFA. Residues 720-887 lie on the Cytoplasmic side of the membrane; it reads TQAYVRKRKG…YSAPYEHRKK (168 aa). Disordered stretches follow at residues 794 to 815 and 859 to 887; these read AIQE…NGSC and SNSE…HRKK.

It belongs to the amiloride-sensitive sodium channel (TC 1.A.6) family. As to expression, expressed in body wall muscle.

The protein resides in the membrane. In terms of biological role, ion channel which is permeable to small monovalent cations. Shown not to be H+-ion gated. May be mechanosensitive and is required for growth and muscle development. The sequence is that of Degenerin-like protein unc-105 (unc-105) from Caenorhabditis elegans.